We begin with the raw amino-acid sequence, 206 residues long: Delta and osm-11 homolog protein 1 (206 aa).

This chain is Delta and osm-11 homolog protein 1 (dos-1), found in Caenorhabditis elegans.